The sequence spans 190 residues: Holliday junction branch migration complex subunit RuvA (190 aa).

The interval 1–64 (MIGRITGTLI…EDAQLLYGFG (64 aa)) is domain I. The segment at 65–137 (SSAERSTFRE…MRGKLGADIG (73 aa)) is domain II. The flexible linker stretch occupies residues 137–141 (GATPH). The interval 142 to 190 (AAGGHQSDILNALLALGYSDKESQAALKKLPEGVDVSEGIRLALKALVR) is domain III.

This sequence belongs to the RuvA family. As to quaternary structure, homotetramer. Forms an RuvA(8)-RuvB(12)-Holliday junction (HJ) complex. HJ DNA is sandwiched between 2 RuvA tetramers; dsDNA enters through RuvA and exits via RuvB. An RuvB hexamer assembles on each DNA strand where it exits the tetramer. Each RuvB hexamer is contacted by two RuvA subunits (via domain III) on 2 adjacent RuvB subunits; this complex drives branch migration. In the full resolvosome a probable DNA-RuvA(4)-RuvB(12)-RuvC(2) complex forms which resolves the HJ.

The protein resides in the cytoplasm. In terms of biological role, the RuvA-RuvB-RuvC complex processes Holliday junction (HJ) DNA during genetic recombination and DNA repair, while the RuvA-RuvB complex plays an important role in the rescue of blocked DNA replication forks via replication fork reversal (RFR). RuvA specifically binds to HJ cruciform DNA, conferring on it an open structure. The RuvB hexamer acts as an ATP-dependent pump, pulling dsDNA into and through the RuvAB complex. HJ branch migration allows RuvC to scan DNA until it finds its consensus sequence, where it cleaves and resolves the cruciform DNA. This is Holliday junction branch migration complex subunit RuvA from Bordetella parapertussis (strain 12822 / ATCC BAA-587 / NCTC 13253).